Here is a 95-residue protein sequence, read N- to C-terminus: UPF0235 protein Ssed_1229 (95 aa).

This sequence belongs to the UPF0235 family.

In Shewanella sediminis (strain HAW-EB3), this protein is UPF0235 protein Ssed_1229.